Reading from the N-terminus, the 473-residue chain is Biotin-dependent acetyl-/propionyl-coenzyme A carboxylase beta6 subunit (473 aa).

In terms of domain architecture, CoA carboxyltransferase N-terminal spans Met-1 to Glu-224. Residues Ala-225 to Leu-473 form the CoA carboxyltransferase C-terminal domain.

Belongs to the AccD/PCCB family. In terms of assembly, the biotin-dependent acyl-CoA carboxylase complex is composed of AccA3, which contains the biotin carboxylase (BC) and biotin carboxyl carrier protein (BCCP) domains, and AccD6, which contains the carboxyl transferase (CT) domain.

It catalyses the reaction N(6)-carboxybiotinyl-L-lysyl-[protein] + acetyl-CoA = N(6)-biotinyl-L-lysyl-[protein] + malonyl-CoA. It carries out the reaction N(6)-carboxybiotinyl-L-lysyl-[protein] + propanoyl-CoA = methylmalonyl-CoA + N(6)-biotinyl-L-lysyl-[protein]. It participates in lipid metabolism; fatty acid biosynthesis. Its pathway is lipid metabolism; mycolic acid biosynthesis. Its function is as follows. Component of a biotin-dependent acyl-CoA carboxylase complex. This subunit transfers the CO2 from carboxybiotin to the CoA ester substrate. When associated with the alpha3 subunit AccA3, is involved in the carboxylation of acetyl-CoA and propionyl-CoA. The sequence is that of Biotin-dependent acetyl-/propionyl-coenzyme A carboxylase beta6 subunit (accD6) from Mycobacterium bovis (strain ATCC BAA-935 / AF2122/97).